Here is a 111-residue protein sequence, read N- to C-terminus: Disintegrin piscivostatin-alpha (111 aa).

The N-terminal stretch at 1–20 (MIQVLLVTICLAVFPYQGSS) is a signal peptide. A propeptide spanning residues 21–44 (IILESGNVNDYEVVYPRKITPLPK) is cleaved from the precursor. The Disintegrin domain occupies 45–111 (GAVQPKNPCC…GDCPRKHFYA (67 aa)). Cystine bridges form between Cys-53-Cys-76, Cys-67-Cys-73, Cys-72-Cys-97, and Cys-85-Cys-104. Residues 89–91 (RGD) carry the Cell attachment site motif. A propeptide spanning residues 110–111 (YA) is cleaved from the precursor.

This sequence belongs to the disintegrin family. Dimeric disintegrin subfamily. Heterodimer with piscivostatin-beta; disulfide-linked. As to expression, expressed by the venom gland.

It is found in the secreted. In terms of biological role, inhibits fibrinogen interaction with platelets. Acts by binding to alpha-IIb/beta-3 (ITGA2B/ITGB3) on the platelet surface and inhibits both ADP-induced platelet aggregation and platelet aggregate dissociation in human platelet-rich plasma. The chain is Disintegrin piscivostatin-alpha from Agkistrodon piscivorus piscivorus (Eastern cottonmouth).